The primary structure comprises 319 residues: ATP-dependent 6-phosphofructokinase (319 aa).

Glycine 11 provides a ligand contact to ATP. 21 to 25 lines the ADP pocket; that stretch reads RAVVR. ATP contacts are provided by residues 72–73 and 102–105; these read RC and GDGS. Aspartate 103 contributes to the Mg(2+) binding site. 125-127 contacts substrate; that stretch reads TID. The active-site Proton acceptor is the aspartate 127. Arginine 154 provides a ligand contact to ADP. Substrate is bound by residues arginine 162 and 169–171; that span reads MGR. ADP is bound by residues 185–187, arginine 211, and 213–215; these read GAE and KKH. Substrate contacts are provided by residues glutamate 222, arginine 243, and 249 to 252; that span reads HIQR.

This sequence belongs to the phosphofructokinase type A (PFKA) family. ATP-dependent PFK group I subfamily. Prokaryotic clade 'B1' sub-subfamily. In terms of assembly, homotetramer. Mg(2+) serves as cofactor.

The protein localises to the cytoplasm. The enzyme catalyses beta-D-fructose 6-phosphate + ATP = beta-D-fructose 1,6-bisphosphate + ADP + H(+). It participates in carbohydrate degradation; glycolysis; D-glyceraldehyde 3-phosphate and glycerone phosphate from D-glucose: step 3/4. Its activity is regulated as follows. Allosterically activated by ADP and other diphosphonucleosides, and allosterically inhibited by phosphoenolpyruvate. Catalyzes the phosphorylation of D-fructose 6-phosphate to fructose 1,6-bisphosphate by ATP, the first committing step of glycolysis. The sequence is that of ATP-dependent 6-phosphofructokinase from Shouchella clausii (strain KSM-K16) (Alkalihalobacillus clausii).